A 351-amino-acid polypeptide reads, in one-letter code: Divinyl chlorophyll a/b light-harvesting protein PcbC (351 aa).

Transmembrane regions (helical) follow at residues 27–47 (FIAAHAAHAGLMMFWAGAFTL), 64–84 (LICLPHLAGLGIGGVSNGVIT), 89–109 (CTVIAVLHLIFSGVLGAGGLL), 203–223 (VMGGHAFLAFFLIIGGAFHIA), 244–264 (VLSYSLAGVAYCAFVAAFWCA), and 306–326 (LSNVHFYLGFFFLQGHLWHAL).

Belongs to the PsbB/PsbC family. IsiA/Pcb subfamily. In terms of assembly, the antenna complex consists of divinyl chlorophylls (a and b) and divinyl chlorophyll a/b binding proteins and binds more divinyl chlorophyll b than does the antenna complex from high-light-adapted Prochlorococcus. Divinyl chlorophyll a serves as cofactor. It depends on divinyl chlorophyll b as a cofactor.

It localises to the cellular thylakoid membrane. Its function is as follows. The antenna complex functions as a light receptor, it captures and delivers excitation energy to photosystems II and I. The Prochlorales pcb genes are not related to higher plant LHCs. The chain is Divinyl chlorophyll a/b light-harvesting protein PcbC (pcbC) from Prochlorococcus marinus (strain SARG / CCMP1375 / SS120).